We begin with the raw amino-acid sequence, 80 residues long: Protein KorB (80 aa).

2 consecutive DNA-binding regions (H-T-H motif) follow at residues alanine 13–aspartate 32 and asparagine 56–glutamate 75.

Its function is as follows. Repressor for the transcription of certain pIJ101 promoters, including those the from kilA and kilB loci. The chain is Protein KorB (korB) from Streptomyces lividans.